The primary structure comprises 474 residues: Ubiquinol-cytochrome-c reductase complex core protein 2, mitochondrial (474 aa).

The N-terminal 42 residues, 1 to 42 (MKSVVRSKGTQALFRRFSSALGDSINPNQVGVGDNVIRVNGR), are a transit peptide targeting the mitochondrion.

This sequence belongs to the peptidase M16 family. UQCRC2/QCR2 subfamily. As to quaternary structure, component of the ubiquinol-cytochrome c oxidoreductase (cytochrome b-c1 complex, complex III, CIII), a multisubunit enzyme composed of 3 respiratory subunits cytochrome b, cytochrome c1 and Rieske protein, 2 core protein subunits, and additional low-molecular weight protein subunits. The complex exists as an obligatory dimer and forms supercomplexes (SCs) in the inner mitochondrial membrane with cytochrome c oxidase (complex IV, CIV).

The protein resides in the mitochondrion inner membrane. Component of the ubiquinol-cytochrome c oxidoreductase, a multisubunit transmembrane complex that is part of the mitochondrial electron transport chain which drives oxidative phosphorylation. The respiratory chain contains 3 multisubunit complexes succinate dehydrogenase (complex II, CII), ubiquinol-cytochrome c oxidoreductase (cytochrome b-c1 complex, complex III, CIII) and cytochrome c oxidase (complex IV, CIV), that cooperate to transfer electrons derived from NADH and succinate to molecular oxygen, creating an electrochemical gradient over the inner membrane that drives transmembrane transport and the ATP synthase. The cytochrome b-c1 complex catalyzes electron transfer from ubiquinol to cytochrome c, linking this redox reaction to translocation of protons across the mitochondrial inner membrane, with protons being carried across the membrane as hydrogens on the quinol. In the process called Q cycle, 2 protons are consumed from the matrix, 4 protons are released into the intermembrane space and 2 electrons are passed to cytochrome c. In Euglena gracilis, this protein is Ubiquinol-cytochrome-c reductase complex core protein 2, mitochondrial.